The following is a 912-amino-acid chain: Protein translocase subunit SecA (912 aa).

ATP contacts are provided by residues Gln-87, 105 to 109, and Asp-508; that span reads GEGKT. Positions 865–912 are disordered; that stretch reads DEEAAQVQSGNAPLPVSQVTRDEPKVGRNDPCPCGSGKKYKHCHGQLS. Zn(2+) is bound by residues Cys-896, Cys-898, Cys-907, and His-908. The segment covering 902–912 has biased composition (basic residues); the sequence is KKYKHCHGQLS.

This sequence belongs to the SecA family. As to quaternary structure, monomer and homodimer. Part of the essential Sec protein translocation apparatus which comprises SecA, SecYEG and auxiliary proteins SecDF-YajC and YidC. Zn(2+) serves as cofactor.

It localises to the cell inner membrane. The protein resides in the cytoplasm. The catalysed reaction is ATP + H2O + cellular proteinSide 1 = ADP + phosphate + cellular proteinSide 2.. In terms of biological role, part of the Sec protein translocase complex. Interacts with the SecYEG preprotein conducting channel. Has a central role in coupling the hydrolysis of ATP to the transfer of proteins into and across the cell membrane, serving both as a receptor for the preprotein-SecB complex and as an ATP-driven molecular motor driving the stepwise translocation of polypeptide chains across the membrane. The protein is Protein translocase subunit SecA of Xanthomonas oryzae pv. oryzae (strain PXO99A).